The sequence spans 248 residues: 3-deoxy-manno-octulosonate cytidylyltransferase (248 aa).

This sequence belongs to the KdsB family.

It localises to the cytoplasm. It carries out the reaction 3-deoxy-alpha-D-manno-oct-2-ulosonate + CTP = CMP-3-deoxy-beta-D-manno-octulosonate + diphosphate. It participates in nucleotide-sugar biosynthesis; CMP-3-deoxy-D-manno-octulosonate biosynthesis; CMP-3-deoxy-D-manno-octulosonate from 3-deoxy-D-manno-octulosonate and CTP: step 1/1. It functions in the pathway bacterial outer membrane biogenesis; lipopolysaccharide biosynthesis. In terms of biological role, activates KDO (a required 8-carbon sugar) for incorporation into bacterial lipopolysaccharide in Gram-negative bacteria. The polypeptide is 3-deoxy-manno-octulosonate cytidylyltransferase (Escherichia coli O6:H1 (strain CFT073 / ATCC 700928 / UPEC)).